The sequence spans 182 residues: Heat shock protein beta-2 (182 aa).

The sHSP domain maps to 55 to 163 (RAGEGARAGA…DTEVNEVYIS (109 aa)).

Belongs to the small heat shock protein (HSP20) family. In terms of assembly, interacts with DMPK; may enhance its kinase activity.

The protein localises to the cytoplasm. The protein resides in the nucleus. Functionally, may regulate the kinase DMPK. The protein is Heat shock protein beta-2 (Hspb2) of Mus musculus (Mouse).